Consider the following 430-residue polypeptide: Adenylosuccinate synthetase (430 aa).

GTP contacts are provided by residues 12 to 18 (GDEGKGK) and 40 to 42 (GHT). The active-site Proton acceptor is D13. D13 and G40 together coordinate Mg(2+). Residues 13-16 (DEGK), 38-41 (NAGH), T129, R143, Q224, T239, and R303 each bind IMP. Residue H41 is the Proton donor of the active site. Position 299–305 (299–305 (TVSNRER)) interacts with substrate. GTP-binding positions include R305, 331-333 (KLD), and 413-415 (STG).

It belongs to the adenylosuccinate synthetase family. As to quaternary structure, homodimer. Mg(2+) serves as cofactor.

Its subcellular location is the cytoplasm. The catalysed reaction is IMP + L-aspartate + GTP = N(6)-(1,2-dicarboxyethyl)-AMP + GDP + phosphate + 2 H(+). The protein operates within purine metabolism; AMP biosynthesis via de novo pathway; AMP from IMP: step 1/2. In terms of biological role, plays an important role in the de novo pathway of purine nucleotide biosynthesis. Catalyzes the first committed step in the biosynthesis of AMP from IMP. This is Adenylosuccinate synthetase from Ehrlichia ruminantium (strain Gardel).